A 263-amino-acid chain; its full sequence is MNSFYPSRKLGQNFTVDQSVIAKTCRLIKSLNPTALIEVGPGKGALTKALLKLQLPYHGIELDKRLAEYLLVNEILTEEQLTIGDALKQNLDQYFPDTIPLLCGNIPYSISSPLIANFLASKLQQFVLVCQWEFGQRLVAPVNSPNYSAFGVFCQYHLQIKSVFKIDKVAFKPKPQVDSVLMLLKKKPQVAYEAHFGRFLKQCFHQRRKLLVNNLKQLLPPTLLTNVLQQQDLAATVRAQELTPTQLFRLYLSLKPHLSDGKD.

The S-adenosyl-L-methionine site is built by asparagine 13, threonine 15, glycine 40, glutamate 61, aspartate 85, and asparagine 105.

It belongs to the class I-like SAM-binding methyltransferase superfamily. rRNA adenine N(6)-methyltransferase family. RsmA subfamily.

Its subcellular location is the cytoplasm. The enzyme catalyses adenosine(1518)/adenosine(1519) in 16S rRNA + 4 S-adenosyl-L-methionine = N(6)-dimethyladenosine(1518)/N(6)-dimethyladenosine(1519) in 16S rRNA + 4 S-adenosyl-L-homocysteine + 4 H(+). Its function is as follows. Specifically dimethylates two adjacent adenosines (A1518 and A1519) in the loop of a conserved hairpin near the 3'-end of 16S rRNA in the 30S particle. May play a critical role in biogenesis of 30S subunits. The chain is Ribosomal RNA small subunit methyltransferase A from Mycoplasma pneumoniae (strain ATCC 29342 / M129 / Subtype 1) (Mycoplasmoides pneumoniae).